The primary structure comprises 534 residues: Serine/threonine-protein phosphatase 2B catalytic subunit (534 aa).

Residues Asp88, His90, and Asp116 each contribute to the Fe cation site. Zn(2+) is bound by residues Asp116 and Asn148. Residue His149 is the Proton donor of the active site. His197 and His279 together coordinate Zn(2+). 2 disordered regions span residues 375–398 and 475–534; these read LEDE…DVES and PSHE…TREA. 2 stretches are compositionally biased toward basic and acidic residues: residues 475–497 and 524–534; these read PSHE…RAQQ and QRDAARETREA.

The protein belongs to the PPP phosphatase family. PP-2B subfamily. Composed of two components (A and B), the A component is the catalytic subunit and the B component confers calcium sensitivity. It depends on Fe(3+) as a cofactor. Zn(2+) is required as a cofactor.

It carries out the reaction O-phospho-L-seryl-[protein] + H2O = L-seryl-[protein] + phosphate. The catalysed reaction is O-phospho-L-threonyl-[protein] + H2O = L-threonyl-[protein] + phosphate. Functionally, calcium-dependent, calmodulin-stimulated protein phosphatase. This subunit may have a role in the calmodulin activation of calcineurin. The polypeptide is Serine/threonine-protein phosphatase 2B catalytic subunit (cnaA) (Aspergillus fumigatus (strain ATCC MYA-4609 / CBS 101355 / FGSC A1100 / Af293) (Neosartorya fumigata)).